Consider the following 562-residue polypeptide: Nucleoprotein (562 aa).

The binding site for the cap structure m7GTP stretch occupies residues 53 to 238; that stretch reads MRRDKRDESD…ITQEESQINI (186 aa). Mn(2+) contacts are provided by Asp381 and Glu383. The Zn(2+) site is built by Glu391, Cys498, His501, and Cys522. Position 526 (Asp526) interacts with Mn(2+).

Belongs to the arenaviridae nucleocapsid protein family. In terms of assembly, homomultimerizes to form the nucleocapsid. Binds to viral genomic RNA. Interacts with glycoprotein G2. Interacts with protein Z; this interaction probably directs the encapsidated genome to budding sites. Interacts with protein L; this interaction does not interfere with Z-L interaction. Interacts with host IKBKE (via Protein kinase domain); the interaction inhibits IKBKE kinase activity.

It localises to the virion. The protein resides in the host cytoplasm. Its function is as follows. Encapsidates the genome, protecting it from nucleases. The encapsidated genomic RNA is termed the nucleocapsid (NC). Serves as template for viral transcription and replication. The increased presence of protein N in host cell does not seem to trigger the switch from transcription to replication as observed in other negative strain RNA viruses. Through the interaction with host IKBKE, strongly inhibits the phosphorylation and nuclear translocation of host IRF3, a protein involved in interferon activation pathway, leading to the inhibition of interferon-beta and IRF3-dependent promoters activation. Also encodes a functional 3'-5' exoribonuclease that degrades preferentially dsRNA substrates and thereby participates in the suppression of interferon induction. The polypeptide is Nucleoprotein (Bear Canyon mammarenavirus (isolate Mouse/United States/AV A0070039/2000) (BCNV)).